The chain runs to 506 residues: Serine/threonine-protein kinase D6PKL1 (506 aa).

A disordered region spans residues Met-1–Lys-96. Over residues Glu-12–Pro-23 the composition is skewed to basic and acidic residues. Residues Glu-24–Lys-54 show a composition bias toward polar residues. The span at Thr-55–Gln-67 shows a compositional bias: basic and acidic residues. Positions Ser-77 to Ser-92 are enriched in low complexity. In terms of domain architecture, Protein kinase spans Phe-123–Phe-456. ATP is bound by residues Leu-129–Val-137 and Lys-152. Asp-248 acts as the Proton acceptor in catalysis. The tract at residues Pro-475–Ser-495 is disordered. The segment covering Ser-480–Ser-492 has biased composition (low complexity).

This sequence belongs to the protein kinase superfamily. AGC Ser/Thr protein kinase family.

The protein resides in the cell membrane. It catalyses the reaction L-seryl-[protein] + ATP = O-phospho-L-seryl-[protein] + ADP + H(+). It carries out the reaction L-threonyl-[protein] + ATP = O-phospho-L-threonyl-[protein] + ADP + H(+). Its function is as follows. Protein kinase that regulates the auxin transport activity of PIN auxin efflux facilitators by direct phosphorylation. D6PK-mediated PIN phosphorylation promotes auxin transport in the hypocotyl and this is a prerequisite for PHOT1-dependent hypocotyl bending. The protein is Serine/threonine-protein kinase D6PKL1 (D6PKL1) of Arabidopsis thaliana (Mouse-ear cress).